The following is a 210-amino-acid chain: Dof zinc finger protein DOF4.4 (210 aa).

The Dof-type zinc-finger motif lies at 24–78; sequence RVCPRCDSDNTKFCFYNNYSESQPRYFCKNCRRYWTHGGALRNIPVGGSCRKPKR. Residues C26, C29, C51, and C54 each contribute to the Zn(2+) site.

It localises to the nucleus. Functionally, transcription factor that binds specifically to a 5'-AA[AG]G-3' consensus core sequence. The protein is Dof zinc finger protein DOF4.4 (DOF4.4) of Arabidopsis thaliana (Mouse-ear cress).